The chain runs to 121 residues: NADH-ubiquinone oxidoreductase chain 3 (121 aa).

Helical transmembrane passes span 11–31, 63–83, and 90–110; these read ILIF…LSYF, FYLV…LFPW, and ISII…IGFI.

It belongs to the complex I subunit 3 family.

It is found in the mitochondrion membrane. It carries out the reaction a ubiquinone + NADH + 5 H(+)(in) = a ubiquinol + NAD(+) + 4 H(+)(out). Core subunit of the mitochondrial membrane respiratory chain NADH dehydrogenase (Complex I) that is believed to belong to the minimal assembly required for catalysis. Complex I functions in the transfer of electrons from NADH to the respiratory chain. The immediate electron acceptor for the enzyme is believed to be ubiquinone. The chain is NADH-ubiquinone oxidoreductase chain 3 (ND3) from Chondrus crispus (Carrageen Irish moss).